The primary structure comprises 495 residues: MLEHFCECYSNLSGLILCPVLGSITPLFIPNSRIRPIRLIGLCASLITFLYSPVPRIQFDSSTAKSQFVESLRWLPYENINFYLGIDGISLFFVILTTFLIPICISVGWSGMRSYGKEYITAFLIREFLMIAVFRMLDLLLFYVFPESVPIPMFIIIGVWGSRQRKIKAAYQFFLYTLLGSLFMLLAILLILFQTGTTDLQISLTTEFSERRQIFLWIASFASFAVKVPMVPVHIWLPEAHVEAPTAGSVILAGIPLKFGTHGFLRFSIPMFPEATLCSTPFIYTLSAIAIIYTSLTTSRQIDLKKIIAYSSVAHMNLVTIGMFSPNIQGIGGSILPMLSHGLVPSALFLCVGVLYDRHKTRLVRYYGGLVSTMPNLSTIFFSFTLANMSSPGTSSFIGEFPILVGAFQRNSLVATLAALGMILGAAYSLWLYNRVVSGNLKPDFLHKFSDSNGREVSIFIPFLVGLVRMGVHPKVFPDCMHTSVSNLVQHGKFH.

The next 11 helical transmembrane spans lie at 9 to 29 (YSNL…PLFI), 39 to 59 (LIGL…RIQF), 89 to 109 (ISLF…SVGW), 139 to 159 (LLLF…IIGV), 173 to 193 (FFLY…LILF), 214 to 234 (IFLW…VPVH), 272 to 292 (FPEA…IAII), 313 to 333 (VAHM…GIGG), 335 to 355 (ILPM…VGVL), 367 to 387 (YGGL…FTLA), and 413 to 433 (LVAT…LWLY).

This sequence belongs to the complex I subunit 4 family.

The protein localises to the mitochondrion membrane. It carries out the reaction a ubiquinone + NADH + 5 H(+)(in) = a ubiquinol + NAD(+) + 4 H(+)(out). Its function is as follows. Core subunit of the mitochondrial membrane respiratory chain NADH dehydrogenase (Complex I) that is believed to belong to the minimal assembly required for catalysis. Complex I functions in the transfer of electrons from NADH to the respiratory chain. The immediate electron acceptor for the enzyme is believed to be ubiquinone. In Brassica campestris (Field mustard), this protein is NADH-ubiquinone oxidoreductase chain 4 (ND4).